A 730-amino-acid chain; its full sequence is Phosphoribosylformylglycinamidine synthase subunit PurL (730 aa).

Residue His-44 is part of the active site. 2 residues coordinate ATP: Tyr-47 and Lys-86. Glu-88 contacts Mg(2+). Substrate contacts are provided by residues Ser-89–His-92 and Arg-111. Residue His-90 is the Proton acceptor of the active site. Position 112 (Asp-112) interacts with Mg(2+). Residue Gln-235 participates in substrate binding. Asp-263 lines the Mg(2+) pocket. Glu-307–Gln-309 contacts substrate. ATP is bound by residues Asn-489 and Gly-526. Asn-527 is a binding site for Mg(2+). A substrate-binding site is contributed by Ser-529.

The protein belongs to the FGAMS family. In terms of assembly, monomer. Part of the FGAM synthase complex composed of 1 PurL, 1 PurQ and 2 PurS subunits.

Its subcellular location is the cytoplasm. It catalyses the reaction N(2)-formyl-N(1)-(5-phospho-beta-D-ribosyl)glycinamide + L-glutamine + ATP + H2O = 2-formamido-N(1)-(5-O-phospho-beta-D-ribosyl)acetamidine + L-glutamate + ADP + phosphate + H(+). Its pathway is purine metabolism; IMP biosynthesis via de novo pathway; 5-amino-1-(5-phospho-D-ribosyl)imidazole from N(2)-formyl-N(1)-(5-phospho-D-ribosyl)glycinamide: step 1/2. Its function is as follows. Part of the phosphoribosylformylglycinamidine synthase complex involved in the purines biosynthetic pathway. Catalyzes the ATP-dependent conversion of formylglycinamide ribonucleotide (FGAR) and glutamine to yield formylglycinamidine ribonucleotide (FGAM) and glutamate. The FGAM synthase complex is composed of three subunits. PurQ produces an ammonia molecule by converting glutamine to glutamate. PurL transfers the ammonia molecule to FGAR to form FGAM in an ATP-dependent manner. PurS interacts with PurQ and PurL and is thought to assist in the transfer of the ammonia molecule from PurQ to PurL. In Pelagibacter ubique (strain HTCC1062), this protein is Phosphoribosylformylglycinamidine synthase subunit PurL.